Consider the following 113-residue polypeptide: uncharacterized protein (113 aa).

Positions methionine 1–serine 22 are cleaved as a signal peptide. A glycan (N-linked (GlcNAc...) asparagine) is linked at asparagine 47.

It is found in the secreted. This is an uncharacterized protein from Caenorhabditis elegans.